Here is a 314-residue protein sequence, read N- to C-terminus: ATP synthase gamma chain (314 aa).

The protein belongs to the ATPase gamma chain family. As to quaternary structure, F-type ATPases have 2 components, CF(1) - the catalytic core - and CF(0) - the membrane proton channel. CF(1) has five subunits: alpha(3), beta(3), gamma(1), delta(1), epsilon(1). CF(0) has three main subunits: a, b and c.

The protein resides in the cellular thylakoid membrane. Produces ATP from ADP in the presence of a proton gradient across the membrane. The gamma chain is believed to be important in regulating ATPase activity and the flow of protons through the CF(0) complex. This is ATP synthase gamma chain from Synechocystis sp. (strain ATCC 27184 / PCC 6803 / Kazusa).